A 330-amino-acid chain; its full sequence is Malate dehydrogenase (330 aa).

12-18 (GAAGQIG) contacts NAD(+). Positions 93 and 99 each coordinate substrate. NAD(+) contacts are provided by residues asparagine 106, glutamine 113, and 130–132 (VGN). Substrate-binding residues include asparagine 132 and arginine 163. Histidine 188 acts as the Proton acceptor in catalysis.

It belongs to the LDH/MDH superfamily. MDH type 2 family.

It carries out the reaction (S)-malate + NAD(+) = oxaloacetate + NADH + H(+). Functionally, catalyzes the reversible oxidation of malate to oxaloacetate. This Legionella pneumophila subsp. pneumophila (strain Philadelphia 1 / ATCC 33152 / DSM 7513) protein is Malate dehydrogenase.